Consider the following 108-residue polypeptide: Ig kappa chain V-V region HP R16.7 (108 aa).

A framework-1 region spans residues Asp1 to Cys23. Cys23 and Cys88 are oxidised to a cystine. Positions Arg24–Asn34 are complementarity-determining-1. Positions Trp35 to Tyr49 are framework-2. The tract at residues Tyr50 to Ser56 is complementarity-determining-2. A framework-3 region spans residues Gly57 to Cys88. Residues Gln89 to Thr97 are complementarity-determining-3. A framework-4 region spans residues Phe98–Arg108.

The chain is Ig kappa chain V-V region HP R16.7 from Mus musculus (Mouse).